The sequence spans 190 residues: Small ribosomal subunit protein uS5 (190 aa).

One can recognise an S5 DRBM domain in the interval 22-85 (FVDKLVHINR…ESAKRNLTRV (64 aa)).

Belongs to the universal ribosomal protein uS5 family. As to quaternary structure, part of the 30S ribosomal subunit. Contacts proteins S4 and S8.

Its function is as follows. With S4 and S12 plays an important role in translational accuracy. Functionally, located at the back of the 30S subunit body where it stabilizes the conformation of the head with respect to the body. The sequence is that of Small ribosomal subunit protein uS5 from Rhodopseudomonas palustris (strain BisB18).